Reading from the N-terminus, the 150-residue chain is Large ribosomal subunit protein bL9 (150 aa).

This sequence belongs to the bacterial ribosomal protein bL9 family.

Functionally, binds to the 23S rRNA. The polypeptide is Large ribosomal subunit protein bL9 (Alteromonas mediterranea (strain DSM 17117 / CIP 110805 / LMG 28347 / Deep ecotype)).